The chain runs to 200 residues: Rho-related protein racD (200 aa).

Ala-20, Gly-22, Lys-23, Thr-24, Cys-25, Tyr-39, and Thr-42 together coordinate GTP. Position 24 (Thr-24) interacts with Mg(2+). 2 short sequence motifs (switch) span residues 33-44 and 64-82; these read NEFPKDYVPTVF and DTAG…YPNT. Thr-42 lines the Mg(2+) pocket. Positions 123, 125, and 166 each coordinate GTP. The residue at position 197 (Cys-197) is a Cysteine methyl ester. Cys-197 carries the S-geranylgeranyl cysteine lipid modification. The propeptide at 198–200 is removed in mature form; that stretch reads ALL.

The protein belongs to the small GTPase superfamily. Rho family. It depends on Mg(2+) as a cofactor.

Its subcellular location is the cell membrane. It localises to the cytoplasm. The protein resides in the cytoskeleton. It carries out the reaction GTP + H2O = GDP + phosphate + H(+). Regulated by guanine nucleotide exchange factors (GEFs) which promote the exchange of bound GDP for free GTP, GTPase activating proteins (GAPs) which increase the GTP hydrolysis activity, and GDP dissociation inhibitors which inhibit the dissociation of the nucleotide from the GTPase. Its function is as follows. Small GTPase which cycles between active GTP-bound and inactive GDP-bound states. The chain is Rho-related protein racD from Entamoeba histolytica (strain ATCC 30459 / HM-1:IMSS / ABRM).